The sequence spans 602 residues: Protein indeterminate-domain 5, chloroplastic (602 aa).

2 stretches are compositionally biased toward low complexity: residues 1–10 (MAASSSSAAS) and 21–30 (HLLPPNSSAA). A chloroplast-targeting transit peptide spans 1-50 (MAASSSSAASFFGVRQDDQSHLLPPNSSAAAPPPPPPHHQAPLPPLEAPP). Positions 1-65 (MAASSSSAAS…NQPRTPNSDA (65 aa)) are disordered. A compositionally biased stretch (pro residues) spans 31 to 48 (APPPPPPHHQAPLPPLEA). At threonine 60 the chain carries Phosphothreonine. Serine 71 bears the Phosphoserine mark. C2H2-type zinc fingers lie at residues 81-103 (FICE…RRGH) and 122-152 (YLCP…YRKH). A C2H2-type 2; degenerate zinc finger spans residues 157–180 (WKCDKCSKRYAVQSDWKAHSKTCG). Positions 159, 162, 175, 179, 186, 188, 201, and 205 each coordinate Zn(2+). A CCHC-type 2; atypical zinc finger spans residues 184 to 207 (YRCDCGTLFSRRDSFITHRAFCDA). Residues 194–206 (RRDSFITHRAFCD) are SHR-binding. Disordered stretches follow at residues 443 to 467 (KAAQ…NNAS) and 537 to 602 (KSMS…HASF). 3 stretches are compositionally biased toward low complexity: residues 448–467 (GSTS…NNAS), 546–560 (QQQQ…QQQQ), and 570–579 (SSSDSADRSS).

As to quaternary structure, binds to RGA and SCL3 competitively. As to expression, highly expressed in leaf tissues.

The protein localises to the plastid. It localises to the chloroplast. Its function is as follows. Transcription factor acting as a positive regulator of the starch synthase SS4. Controls chloroplast development and starch granule formation. Binds DNA via its zinc fingers. Recognizes and binds to SCL3 promoter sequence 5'-AGACAA-3' to promote its expression when in complex with RGA. This is Protein indeterminate-domain 5, chloroplastic from Arabidopsis thaliana (Mouse-ear cress).